A 652-amino-acid polypeptide reads, in one-letter code: O-fucosyltransferase 15 (652 aa).

The helical; Signal-anchor for type II membrane protein transmembrane segment at 91–111 (TAAFVIVLVGFFIFVNWFMLS) threads the bilayer. N-linked (GlcNAc...) asparagine glycosylation is found at Asn139, Asn169, and Asn251. 426–428 (HLR) is a substrate binding site. N-linked (GlcNAc...) asparagine glycosylation is found at Asn464, Asn546, and Asn607.

The protein belongs to the glycosyltransferase GT106 family.

The protein resides in the membrane. Its pathway is glycan metabolism. The sequence is that of O-fucosyltransferase 15 from Arabidopsis thaliana (Mouse-ear cress).